The following is a 102-amino-acid chain: NADH-quinone oxidoreductase subunit K (102 aa).

Helical transmembrane passes span 6–26, 31–51, and 62–82; these read ATHFLLLSAALFIIGMVGVLT, LVIFMCIELMLNAVNVSLIGF, and VFALFVIAIAAAEAVVGLGIV.

This sequence belongs to the complex I subunit 4L family. As to quaternary structure, NDH-1 is composed of 14 different subunits. Subunits NuoA, H, J, K, L, M, N constitute the membrane sector of the complex.

Its subcellular location is the cell membrane. The enzyme catalyses a quinone + NADH + 5 H(+)(in) = a quinol + NAD(+) + 4 H(+)(out). NDH-1 shuttles electrons from NADH, via FMN and iron-sulfur (Fe-S) centers, to quinones in the respiratory chain. The immediate electron acceptor for the enzyme in this species is believed to be ubiquinone. Couples the redox reaction to proton translocation (for every two electrons transferred, four hydrogen ions are translocated across the cytoplasmic membrane), and thus conserves the redox energy in a proton gradient. This Thermomicrobium roseum (strain ATCC 27502 / DSM 5159 / P-2) protein is NADH-quinone oxidoreductase subunit K.